Here is a 211-residue protein sequence, read N- to C-terminus: Imidazole glycerol phosphate synthase subunit HisH (211 aa).

One can recognise a Glutamine amidotransferase type-1 domain in the interval 1-211 (MIGIIDYGMG…VGIATGRGNG (211 aa)). Cys-79 functions as the Nucleophile in the catalytic mechanism. Active-site residues include His-186 and Glu-188.

In terms of assembly, heterodimer of HisH and HisF.

The protein resides in the cytoplasm. It carries out the reaction 5-[(5-phospho-1-deoxy-D-ribulos-1-ylimino)methylamino]-1-(5-phospho-beta-D-ribosyl)imidazole-4-carboxamide + L-glutamine = D-erythro-1-(imidazol-4-yl)glycerol 3-phosphate + 5-amino-1-(5-phospho-beta-D-ribosyl)imidazole-4-carboxamide + L-glutamate + H(+). It catalyses the reaction L-glutamine + H2O = L-glutamate + NH4(+). It functions in the pathway amino-acid biosynthesis; L-histidine biosynthesis; L-histidine from 5-phospho-alpha-D-ribose 1-diphosphate: step 5/9. Functionally, IGPS catalyzes the conversion of PRFAR and glutamine to IGP, AICAR and glutamate. The HisH subunit catalyzes the hydrolysis of glutamine to glutamate and ammonia as part of the synthesis of IGP and AICAR. The resulting ammonia molecule is channeled to the active site of HisF. This is Imidazole glycerol phosphate synthase subunit HisH from Geobacillus kaustophilus (strain HTA426).